Here is a 97-residue protein sequence, read N- to C-terminus: NADH-ubiquinone oxidoreductase chain 4L (97 aa).

3 helical membrane passes run 1-21 (MALL…ILLN), 23-43 (LHFL…FIGI), and 60-80 (LLLL…MVAL).

The protein belongs to the complex I subunit 4L family.

It localises to the mitochondrion membrane. It catalyses the reaction a ubiquinone + NADH + 5 H(+)(in) = a ubiquinol + NAD(+) + 4 H(+)(out). Core subunit of the mitochondrial membrane respiratory chain NADH dehydrogenase (Complex I) that is believed to belong to the minimal assembly required for catalysis. Complex I functions in the transfer of electrons from NADH to the respiratory chain. The immediate electron acceptor for the enzyme is believed to be ubiquinone. This chain is NADH-ubiquinone oxidoreductase chain 4L (ND4L), found in Paracentrotus lividus (Common sea urchin).